Consider the following 734-residue polypeptide: Cell surface glycoprotein gp138B (734 aa).

An N-terminal signal peptide occupies residues 1–20 (MKIILTLSIFLICFLQLGQS). Residues N58, N89, N124, N198, N224, N392, N420, N435, N482, N498, N523, N596, N605, N614, N621, and N630 are each glycosylated (N-linked (GlcNAc...) asparagine). One can recognise an IPT/TIG domain in the interval 504-592 (PFIKSYGFLE…SSNEVTFYYF (89 aa)). The disordered stretch occupies residues 678-712 (GETPTPSTTPSTTPSTTPSTTPSSTPTQSPGDDGS). Low complexity predominate over residues 680–712 (TPTPSTTPSTTPSTTPSTTPSSTPTQSPGDDGS). Repeat copies occupy residues 683–686 (PSTT), 687–690 (PSTT), 691–694 (PSTT), and 695–698 (PSTT). The 4 X 4 AA tandem repeats of P-S-T-T stretch occupies residues 683-698 (PSTTPSTTPSTTPSTT). G708 is lipidated: GPI-like-anchor amidated glycine. A propeptide spans 709–734 (DDGSTSSTLSISFYLITLLLLTQQFI) (removed in mature form).

The sugar chains may play important roles in cell fusion. In terms of processing, the GPI-like-anchor contains a phosphoceramide group, rather than a phosphatidyl group.

The protein localises to the cell membrane. Involved in the sexual cell fusion of D.discoideum. The chain is Cell surface glycoprotein gp138B (GP138B) from Dictyostelium discoideum (Social amoeba).